The sequence spans 1466 residues: Helicase ARIP4 (1466 aa).

2 disordered regions span residues 1–137 (MSDE…ERRK) and 185–235 (DSSS…THVN). Residues 11 to 49 (PDLDPDVELEDEEEEEEEEEVAVEEHDRDDEEGLLDDTS) are compositionally biased toward acidic residues. A compositionally biased stretch (low complexity) spans 72–82 (TSTTSSQSEPS). The span at 99-114 (KKRAQKPSHMRRNIRK) shows a compositional bias: basic residues. Glycyl lysine isopeptide (Lys-Gly) (interchain with G-Cter in SUMO2) cross-links involve residues lysine 114 and lysine 126. A compositionally biased stretch (basic and acidic residues) spans 191-200 (EDEKSSRDEV). Lysine 271 participates in a covalent cross-link: Glycyl lysine isopeptide (Lys-Gly) (interchain with G-Cter in SUMO2). Residues 291-511 (RFKTSSGFGC…WCMVDFVRPD (221 aa)) enclose the Helicase ATP-binding domain. 304-311 (HSMGLGKT) serves as a coordination point for ATP. A DEAH box motif is present at residues 462-465 (DEGH). The LXXLL motif 1 signature appears at 550–554 (LHSLL). The tract at residues 649 to 670 (SAGTSARCPPHGTKVKGEDSAL) is disordered. Glycyl lysine isopeptide (Lys-Gly) (interchain with G-Cter in SUMO2) cross-links involve residues lysine 664, lysine 681, lysine 758, lysine 900, lysine 1013, and lysine 1017. The region spanning 727–895 (HLIEESVKLG…RVVDDLNPML (169 aa)) is the Helicase C-terminal domain. 2 disordered regions span residues 1026 to 1045 (QSTP…GVSS) and 1120 to 1170 (ATGK…VSPD). The span at 1135-1154 (SGSQGPSLASTSNGRHSASS) shows a compositional bias: polar residues. A phosphoserine mark is found at serine 1168 and serine 1171. Disordered stretches follow at residues 1184–1212 (VAAA…MDNS) and 1259–1281 (TPSV…APVQ). Phosphothreonine is present on threonine 1259. The LXXLL motif 2 motif lies at 1328–1332 (LSNLL). Residues 1444–1466 (AEVGFSSNDDEDKDDDVIEVTGK) form a disordered region. The segment covering 1451-1466 (NDDEDKDDDVIEVTGK) has biased composition (acidic residues).

The protein belongs to the SNF2/RAD54 helicase family. As to quaternary structure, interacts with AR via its N-terminus. Interacts with DYRK1A. Binds DNA and mononucleosomes, but does not seem to form large multiprotein complexes. Post-translationally, sumoylated. Expressed at relatively low level, with highest expression in testis, liver and kidney. In brain, it is expressed in hippocampal and cerebellar neurons. In testis, it is present at high level in Sertoli cell nuclei. Also present in Leydig cell (at protein level).

It localises to the nucleus. The enzyme catalyses ATP + H2O = ADP + phosphate + H(+). Enzyme activity is enhanced by dsDNA (double-stranded DNA) and ssDNA (single-stranded DNA). In terms of biological role, DNA helicase that modulates androgen receptor (AR)-dependent transactivation in a promoter-dependent manner. Not able to remodel mononucleosomes in vitro. Acts as an AR-coregulator in Sertoli cells. This Mus musculus (Mouse) protein is Helicase ARIP4 (Rad54l2).